The primary structure comprises 408 residues: Branched-chain amino acid aminotransferase 2, chloroplastic (408 aa).

Residues 1-58 constitute a chloroplast transit peptide; sequence MDCAAALLPGFHPNYLLCPSRHFSSLLPKTDLSSPLKFQLQNKQLSLASSHGFSPVIC. Position 152 (Arg152) interacts with pyridoxal 5'-phosphate. Lys254 (proton acceptor) is an active-site residue. Lys254 bears the N6-(pyridoxal phosphate)lysine mark. Glu290 is a binding site for pyridoxal 5'-phosphate.

This sequence belongs to the class-IV pyridoxal-phosphate-dependent aminotransferase family. Pyridoxal 5'-phosphate is required as a cofactor. In terms of tissue distribution, expressed in lupulin glands and leaves.

Its subcellular location is the plastid. The protein resides in the chloroplast. It carries out the reaction L-isoleucine + 2-oxoglutarate = (S)-3-methyl-2-oxopentanoate + L-glutamate. The enzyme catalyses L-leucine + 2-oxoglutarate = 4-methyl-2-oxopentanoate + L-glutamate. The catalysed reaction is L-valine + 2-oxoglutarate = 3-methyl-2-oxobutanoate + L-glutamate. The protein operates within amino-acid biosynthesis; L-isoleucine biosynthesis; L-isoleucine from 2-oxobutanoate: step 4/4. It functions in the pathway amino-acid biosynthesis; L-leucine biosynthesis; L-leucine from 3-methyl-2-oxobutanoate: step 4/4. It participates in amino-acid biosynthesis; L-valine biosynthesis; L-valine from pyruvate: step 4/4. Functionally, converts 2-oxo acids to branched-chain amino acids. Shows no kinetic preferences corresponding to anabolic or catabolic functions, but likely involved in BCAA biosynthesis. In Humulus lupulus (European hop), this protein is Branched-chain amino acid aminotransferase 2, chloroplastic.